Reading from the N-terminus, the 70-residue chain is ATP synthase subunit c (70 aa).

The next 2 membrane-spanning stretches (helical) occupy residues 3-23 (ALAA…IGIA) and 44-64 (LFLI…VIAF).

Belongs to the ATPase C chain family. In terms of assembly, F-type ATPases have 2 components, F(1) - the catalytic core - and F(0) - the membrane proton channel. F(1) has five subunits: alpha(3), beta(3), gamma(1), delta(1), epsilon(1). F(0) has three main subunits: a(1), b(2) and c(10-14). The alpha and beta chains form an alternating ring which encloses part of the gamma chain. F(1) is attached to F(0) by a central stalk formed by the gamma and epsilon chains, while a peripheral stalk is formed by the delta and b chains.

Its subcellular location is the cell membrane. F(1)F(0) ATP synthase produces ATP from ADP in the presence of a proton or sodium gradient. F-type ATPases consist of two structural domains, F(1) containing the extramembraneous catalytic core and F(0) containing the membrane proton channel, linked together by a central stalk and a peripheral stalk. During catalysis, ATP synthesis in the catalytic domain of F(1) is coupled via a rotary mechanism of the central stalk subunits to proton translocation. Functionally, key component of the F(0) channel; it plays a direct role in translocation across the membrane. A homomeric c-ring of between 10-14 subunits forms the central stalk rotor element with the F(1) delta and epsilon subunits. This is ATP synthase subunit c from Caldicellulosiruptor bescii (strain ATCC BAA-1888 / DSM 6725 / KCTC 15123 / Z-1320) (Anaerocellum thermophilum).